We begin with the raw amino-acid sequence, 166 residues long: RNA pyrophosphohydrolase (166 aa).

A Nudix hydrolase domain is found at 8 to 158 (PYRSCVGMML…KRPVYERVVK (151 aa)). Residues 47–68 (GGIDPGEDYWEAAQRELLEETN) carry the Nudix box motif.

The protein belongs to the Nudix hydrolase family. RppH subfamily. A divalent metal cation is required as a cofactor.

Its function is as follows. Accelerates the degradation of transcripts by removing pyrophosphate from the 5'-end of triphosphorylated RNA, leading to a more labile monophosphorylated state that can stimulate subsequent ribonuclease cleavage. The protein is RNA pyrophosphohydrolase of Afipia carboxidovorans (strain ATCC 49405 / DSM 1227 / KCTC 32145 / OM5) (Oligotropha carboxidovorans).